The primary structure comprises 230 residues: MPQMAPVMTIDGPSGAGKGTLCQLLAEKLGWHLLDSGAIYRVLALAALHHDVELDSEAALVPLAANLDVQFQVDSEQVKVVLEGEDVSRTIRTEEVGNAASKIAAFPRVREALLRRQRAFRQTPGLIADGRDMGTVVFPDAEVKIFLDASAEERAQRRYKQLQDKGFDVNFERLLTEIRERDDRDRNRAVAPLKAAEDALVVDSTSMTIDEVLATVLAYAEQQLGDASAS.

12-20 (GPSGAGKGT) provides a ligand contact to ATP.

The protein belongs to the cytidylate kinase family. Type 1 subfamily.

It localises to the cytoplasm. It carries out the reaction CMP + ATP = CDP + ADP. It catalyses the reaction dCMP + ATP = dCDP + ADP. This Aeromonas salmonicida (strain A449) protein is Cytidylate kinase.